Here is a 332-residue protein sequence, read N- to C-terminus: 4-hydroxy-3-methylbut-2-enyl diphosphate reductase (332 aa).

C13 is a [4Fe-4S] cluster binding site. (2E)-4-hydroxy-3-methylbut-2-enyl diphosphate is bound by residues H41 and H75. Dimethylallyl diphosphate contacts are provided by H41 and H75. Positions 41 and 75 each coordinate isopentenyl diphosphate. [4Fe-4S] cluster is bound at residue C97. H125 contributes to the (2E)-4-hydroxy-3-methylbut-2-enyl diphosphate binding site. H125 provides a ligand contact to dimethylallyl diphosphate. H125 serves as a coordination point for isopentenyl diphosphate. Catalysis depends on E127, which acts as the Proton donor. Residue T168 coordinates (2E)-4-hydroxy-3-methylbut-2-enyl diphosphate. C229 contributes to the [4Fe-4S] cluster binding site. The (2E)-4-hydroxy-3-methylbut-2-enyl diphosphate site is built by S257, S258, N259, and S306. S257, S258, N259, and S306 together coordinate dimethylallyl diphosphate. Isopentenyl diphosphate-binding residues include S257, S258, N259, and S306.

The protein belongs to the IspH family. [4Fe-4S] cluster serves as cofactor.

It catalyses the reaction isopentenyl diphosphate + 2 oxidized [2Fe-2S]-[ferredoxin] + H2O = (2E)-4-hydroxy-3-methylbut-2-enyl diphosphate + 2 reduced [2Fe-2S]-[ferredoxin] + 2 H(+). The enzyme catalyses dimethylallyl diphosphate + 2 oxidized [2Fe-2S]-[ferredoxin] + H2O = (2E)-4-hydroxy-3-methylbut-2-enyl diphosphate + 2 reduced [2Fe-2S]-[ferredoxin] + 2 H(+). The protein operates within isoprenoid biosynthesis; dimethylallyl diphosphate biosynthesis; dimethylallyl diphosphate from (2E)-4-hydroxy-3-methylbutenyl diphosphate: step 1/1. It functions in the pathway isoprenoid biosynthesis; isopentenyl diphosphate biosynthesis via DXP pathway; isopentenyl diphosphate from 1-deoxy-D-xylulose 5-phosphate: step 6/6. In terms of biological role, catalyzes the conversion of 1-hydroxy-2-methyl-2-(E)-butenyl 4-diphosphate (HMBPP) into a mixture of isopentenyl diphosphate (IPP) and dimethylallyl diphosphate (DMAPP). Acts in the terminal step of the DOXP/MEP pathway for isoprenoid precursor biosynthesis. This is 4-hydroxy-3-methylbut-2-enyl diphosphate reductase from Chlorobaculum parvum (strain DSM 263 / NCIMB 8327) (Chlorobium vibrioforme subsp. thiosulfatophilum).